The sequence spans 76 residues: Protein RALF-like 30 (76 aa).

Positions 1 to 22 (MKAWVICLMVISIFMMIEPTLA) are cleaved as a signal peptide. Disulfide bonds link cysteine 37–cysteine 46 and cysteine 66–cysteine 72.

This sequence belongs to the plant rapid alkalinization factor (RALF) family.

Its subcellular location is the secreted. In terms of biological role, cell signaling peptide that may regulate plant stress, growth, and development. Mediates a rapid alkalinization of extracellular space by mediating a transient increase in the cytoplasmic Ca(2+) concentration leading to a calcium-dependent signaling events through a cell surface receptor and a concomitant activation of some intracellular mitogen-activated protein kinases. The protein is Protein RALF-like 30 (RALFL30) of Arabidopsis thaliana (Mouse-ear cress).